The following is a 365-amino-acid chain: 3-dehydroquinate synthase (365 aa).

NAD(+)-binding positions include 106-110 (GVIGD), 130-131 (TT), K142, K151, and 169-172 (FFAT). 3 residues coordinate Zn(2+): E184, H247, and H264.

It belongs to the sugar phosphate cyclases superfamily. Dehydroquinate synthase family. The cofactor is Co(2+). Zn(2+) serves as cofactor. NAD(+) is required as a cofactor.

It is found in the cytoplasm. It catalyses the reaction 7-phospho-2-dehydro-3-deoxy-D-arabino-heptonate = 3-dehydroquinate + phosphate. The protein operates within metabolic intermediate biosynthesis; chorismate biosynthesis; chorismate from D-erythrose 4-phosphate and phosphoenolpyruvate: step 2/7. Functionally, catalyzes the conversion of 3-deoxy-D-arabino-heptulosonate 7-phosphate (DAHP) to dehydroquinate (DHQ). In Listeria monocytogenes serotype 4b (strain CLIP80459), this protein is 3-dehydroquinate synthase.